Here is a 299-residue protein sequence, read N- to C-terminus: Putative syntaxin-2 (299 aa).

The Cytoplasmic segment spans residues 1–270 (MRDRLNEFQS…SAMRKKICVA (270 aa)). The stretch at 112–146 (EKRMRQNQLELLKDNLNKLINLFNETHQDYKSRVS) forms a coiled coil. A t-SNARE coiled-coil homology domain is found at 193–255 (YEDVKKRHGE…KQGSANVKTA (63 aa)). A helical; Anchor for type IV membrane protein transmembrane segment spans residues 271 to 291 (AILITILLILIIVAIILAVVL). The Extracellular portion of the chain corresponds to 292 to 299 (SRGNNNNK).

This sequence belongs to the syntaxin family.

The protein localises to the membrane. Its function is as follows. Potentially involved in docking of synaptic vesicles at presynaptic active zones. This Caenorhabditis elegans protein is Putative syntaxin-2 (syx-2).